We begin with the raw amino-acid sequence, 192 residues long: Probable cobalt-precorrin-6B C(15)-methyltransferase (decarboxylating) (192 aa).

S-adenosyl-L-methionine is bound by residues T20, 44–48 (GSGTG), E68, and A96.

The protein belongs to the methyltransferase superfamily. Archaeal-type CbiT family.

The catalysed reaction is Co-precorrin-6B + S-adenosyl-L-methionine = Co-precorrin-7 + S-adenosyl-L-homocysteine + CO2. The protein operates within cofactor biosynthesis; adenosylcobalamin biosynthesis; cob(II)yrinate a,c-diamide from sirohydrochlorin (anaerobic route): step 8/10. In terms of biological role, catalyzes the methylation of C-15 in cobalt-precorrin-6B followed by the decarboxylation of C-12 to form cobalt-precorrin-7. This Sulfolobus acidocaldarius (strain ATCC 33909 / DSM 639 / JCM 8929 / NBRC 15157 / NCIMB 11770) protein is Probable cobalt-precorrin-6B C(15)-methyltransferase (decarboxylating).